Consider the following 337-residue polypeptide: Glycerol-3-phosphate dehydrogenase [NAD(P)+] (337 aa).

The NADPH site is built by W11, R30, and K113. Residues K113, G141, and S143 each coordinate sn-glycerol 3-phosphate. A145 contacts NADPH. Residues K196, D249, S259, R260, and N261 each coordinate sn-glycerol 3-phosphate. The active-site Proton acceptor is the K196. R260 contacts NADPH. Residues V284 and E286 each contribute to the NADPH site.

Belongs to the NAD-dependent glycerol-3-phosphate dehydrogenase family.

It localises to the cytoplasm. It carries out the reaction sn-glycerol 3-phosphate + NAD(+) = dihydroxyacetone phosphate + NADH + H(+). It catalyses the reaction sn-glycerol 3-phosphate + NADP(+) = dihydroxyacetone phosphate + NADPH + H(+). The protein operates within membrane lipid metabolism; glycerophospholipid metabolism. In terms of biological role, catalyzes the reduction of the glycolytic intermediate dihydroxyacetone phosphate (DHAP) to sn-glycerol 3-phosphate (G3P), the key precursor for phospholipid synthesis. In Leptothrix cholodnii (strain ATCC 51168 / LMG 8142 / SP-6) (Leptothrix discophora (strain SP-6)), this protein is Glycerol-3-phosphate dehydrogenase [NAD(P)+].